The sequence spans 519 residues: Tachykinin-like peptides receptor 99D (519 aa).

At 1–100 (MENRSDFEAD…SFAFVVPWWR (100 aa)) the chain is on the extracellular side. 4 N-linked (GlcNAc...) asparagine glycosylation sites follow: Asn-3, Asn-19, Asn-22, and Asn-61. Residues 101 to 123 (QVLWSILFGGMVIVATGGNLIVV) traverse the membrane as a helical segment. The Cytoplasmic segment spans residues 124–134 (WIVMTTKRMRT). Residues 135–155 (VTNYFIVNLSIADAMVSSLNV) form a helical membrane-spanning segment. Topologically, residues 156 to 175 (TFNYYYMLDSDWPFGEFYCK) are extracellular. A disulfide bond links Cys-174 and Cys-254. The chain crosses the membrane as a helical span at residues 176–197 (LSQFIAMLSICASVFTLMAISI). Topologically, residues 198 to 217 (DRYVAIIRPLQPRMSKRCNL) are cytoplasmic. A helical transmembrane segment spans residues 218–238 (AIAAVIWLASTLISCPMMIIY). The Extracellular portion of the chain corresponds to 239 to 270 (RTEEVPVRGLSNRTVCYPEWPDGPTNHSTMES). The helical transmembrane segment at 271 to 292 (LYNILIIILTYFLPIVSMTVTY) threads the bilayer. Topologically, residues 293–324 (SRVGIELWGSKTIGECTPRQVENVRSKRRVVK) are cytoplasmic. A helical transmembrane segment spans residues 325-346 (MMIVVVLIFAICWLPFHSYFII). At 347 to 361 (TSCYPAITEAPFIQE) the chain is on the extracellular side. Residues 362–384 (LYLAIYWLAMSNSMYNPIIYCWM) form a helical membrane-spanning segment. Topologically, residues 385-519 (NSRFRYGFKM…STANTTQLLS (135 aa)) are cytoplasmic. Residue Cys-399 is the site of S-palmitoyl cysteine attachment. The tract at residues 444–519 (PSSPKSHRIS…STANTTQLLS (76 aa)) is disordered. 2 stretches are compositionally biased toward polar residues: residues 454–465 (HSGTGRSATLRN) and 487–499 (SYQQEMQQRWSGP). The span at 500-519 (NSATAVTNSSSTANTTQLLS) shows a compositional bias: low complexity.

This sequence belongs to the G-protein coupled receptor 1 family. During late embryogenesis (stages 11-15), expressed in the brain and in a specific subset of neurons in each neuromere of the developing ventral ganglion. Expressed in the cortex of the adult brain, which contains the neuronal cell bodies.

The protein resides in the cell membrane. Its function is as follows. Receptor for tachykinin-like peptides. This is Tachykinin-like peptides receptor 99D (TkR99D) from Drosophila melanogaster (Fruit fly).